The primary structure comprises 540 residues: O-phosphoserine--tRNA(Cys) ligase (540 aa).

Residues 188–190 (HMT), 233–235 (SAS), 275–276 (YY), and asparagine 319 contribute to the substrate site.

Belongs to the class-II aminoacyl-tRNA synthetase family. O-phosphoseryl-tRNA(Cys) synthetase subfamily. In terms of assembly, homotetramer. Interacts with SepCysS.

The enzyme catalyses tRNA(Cys) + O-phospho-L-serine + ATP = O-phospho-L-seryl-tRNA(Cys) + AMP + diphosphate. Its function is as follows. Catalyzes the attachment of O-phosphoserine (Sep) to tRNA(Cys). The protein is O-phosphoserine--tRNA(Cys) ligase of Methanococcus aeolicus (strain ATCC BAA-1280 / DSM 17508 / OCM 812 / Nankai-3).